Here is a 318-residue protein sequence, read N- to C-terminus: Pantothenate kinase (318 aa).

96–103 (GSVAVGKS) lines the ATP pocket.

This sequence belongs to the prokaryotic pantothenate kinase family.

Its subcellular location is the cytoplasm. The catalysed reaction is (R)-pantothenate + ATP = (R)-4'-phosphopantothenate + ADP + H(+). It functions in the pathway cofactor biosynthesis; coenzyme A biosynthesis; CoA from (R)-pantothenate: step 1/5. The sequence is that of Pantothenate kinase from Bradyrhizobium diazoefficiens (strain JCM 10833 / BCRC 13528 / IAM 13628 / NBRC 14792 / USDA 110).